The chain runs to 128 residues: Large ribosomal subunit protein uL22 (128 aa).

The protein belongs to the universal ribosomal protein uL22 family. In terms of assembly, part of the 50S ribosomal subunit.

This protein binds specifically to 23S rRNA; its binding is stimulated by other ribosomal proteins, e.g. L4, L17, and L20. It is important during the early stages of 50S assembly. It makes multiple contacts with different domains of the 23S rRNA in the assembled 50S subunit and ribosome. In terms of biological role, the globular domain of the protein is located near the polypeptide exit tunnel on the outside of the subunit, while an extended beta-hairpin is found that lines the wall of the exit tunnel in the center of the 70S ribosome. The chain is Large ribosomal subunit protein uL22 from Rhodopseudomonas palustris (strain BisA53).